The chain runs to 451 residues: Aspartate aminotransferase, mitochondrial (451 aa).

The L-aspartate site is built by glycine 52, tryptophan 155, and asparagine 216. At lysine 286 the chain carries N6-(pyridoxal phosphate)lysine. Arginine 423 contacts L-aspartate.

Belongs to the class-I pyridoxal-phosphate-dependent aminotransferase family. In terms of assembly, homodimer. It depends on pyridoxal 5'-phosphate as a cofactor.

The protein localises to the mitochondrion matrix. It carries out the reaction L-aspartate + 2-oxoglutarate = oxaloacetate + L-glutamate. Functionally, plays a key role in amino acid metabolism. Important for metabolite exchange between mitochondria and cytosol. This Saccharomyces cerevisiae (strain ATCC 204508 / S288c) (Baker's yeast) protein is Aspartate aminotransferase, mitochondrial (AAT1).